Consider the following 187-residue polypeptide: UPF0301 protein VC_0467 (187 aa).

The protein belongs to the UPF0301 (AlgH) family.

The polypeptide is UPF0301 protein VC_0467 (Vibrio cholerae serotype O1 (strain ATCC 39315 / El Tor Inaba N16961)).